The sequence spans 153 residues: Nucleoside diphosphate kinase (153 aa).

Lysine 13, phenylalanine 61, arginine 89, threonine 95, arginine 106, and asparagine 116 together coordinate ATP. Histidine 119 serves as the catalytic Pros-phosphohistidine intermediate.

Belongs to the NDK family. Mg(2+) serves as cofactor. In terms of tissue distribution, highest levels in the liver and kidney with lower levels in the heart, brain and breast muscle.

It localises to the cytoplasm. Its subcellular location is the cell membrane. The enzyme catalyses a 2'-deoxyribonucleoside 5'-diphosphate + ATP = a 2'-deoxyribonucleoside 5'-triphosphate + ADP. It carries out the reaction a ribonucleoside 5'-diphosphate + ATP = a ribonucleoside 5'-triphosphate + ADP. Major role in the synthesis of nucleoside triphosphates other than ATP. The ATP gamma phosphate is transferred to the NDP beta phosphate via a ping-pong mechanism, using a phosphorylated active-site intermediate. This chain is Nucleoside diphosphate kinase, found in Columba livia (Rock dove).